The primary structure comprises 466 residues: Cysteine--tRNA ligase (466 aa).

Position 28 (C28) interacts with Zn(2+). A 'HIGH' region motif is present at residues 30 to 40; it reads PTVYNFFHIGN. Residues C208, H233, and E237 each contribute to the Zn(2+) site. Positions 265 to 269 match the 'KMSKS' region motif; sequence KMSKS. K268 lines the ATP pocket.

It belongs to the class-I aminoacyl-tRNA synthetase family. Monomer. Requires Zn(2+) as cofactor.

It localises to the cytoplasm. The enzyme catalyses tRNA(Cys) + L-cysteine + ATP = L-cysteinyl-tRNA(Cys) + AMP + diphosphate. This chain is Cysteine--tRNA ligase, found in Clostridium perfringens (strain ATCC 13124 / DSM 756 / JCM 1290 / NCIMB 6125 / NCTC 8237 / Type A).